Reading from the N-terminus, the 489-residue chain is tRNA(Ile)-lysidine synthase (489 aa).

ATP is bound at residue 35–40; that stretch reads SGGLDS.

This sequence belongs to the tRNA(Ile)-lysidine synthase family.

It is found in the cytoplasm. It catalyses the reaction cytidine(34) in tRNA(Ile2) + L-lysine + ATP = lysidine(34) in tRNA(Ile2) + AMP + diphosphate + H(+). Functionally, ligates lysine onto the cytidine present at position 34 of the AUA codon-specific tRNA(Ile) that contains the anticodon CAU, in an ATP-dependent manner. Cytidine is converted to lysidine, thus changing the amino acid specificity of the tRNA from methionine to isoleucine. The polypeptide is tRNA(Ile)-lysidine synthase (Burkholderia mallei (strain ATCC 23344)).